Here is a 153-residue protein sequence, read N- to C-terminus: SKP1-like protein 9 (153 aa).

The interaction with the F-box domain of F-box proteins stretch occupies residues 95 to 153 (IKAANYLNIKSLFDLACQTVAEIIKGNTPEQIREFFNIENDLTPEEEAAIRRENKWAFE).

This sequence belongs to the SKP1 family. Part of a SCF (SKP1-cullin-F-box) protein ligase complex. Interacts with CPR1/CPR30 and At3g61590. In terms of tissue distribution, expressed in leaves, shoot apical meristem (SAM), roots, flowers and pollen.

It localises to the nucleus. Its pathway is protein modification; protein ubiquitination. Involved in ubiquitination and subsequent proteasomal degradation of target proteins. Together with CUL1, RBX1 and a F-box protein, it forms a SCF E3 ubiquitin ligase complex. The functional specificity of this complex depends on the type of F-box protein. In the SCF complex, it serves as an adapter that links the F-box protein to CUL1. The protein is SKP1-like protein 9 (ASK9) of Arabidopsis thaliana (Mouse-ear cress).